We begin with the raw amino-acid sequence, 440 residues long: 2-methylisoborneol synthase (440 aa).

Residues 1 to 116 are disordered; that stretch reads MPDSGPLGPH…SPAPAEPAAG (116 aa). Residues 17 to 27 are compositionally biased toward low complexity; that stretch reads TPATTVPDAPA. Residues 48–58 show a composition bias toward pro residues; sequence PPVPIPSPSPP. The segment covering 59–75 has biased composition (low complexity); it reads SGSASAAADTPDATTVG. A compositionally biased stretch (pro residues) spans 102–111; sequence PSLPGSPAPA. 6 residues coordinate Mg(2+): Asp197, Asp198, Glu202, Asn345, Ser349, and Glu353.

This sequence belongs to the terpene synthase family. 2-methylisoborneol synthase subfamily. It depends on Mg(2+) as a cofactor.

The enzyme catalyses (E)-2-methylgeranyl diphosphate + H2O = 2-methylisoborneol + diphosphate. Catalyzes the cyclization of 2-methylgeranyl diphosphate (2-MeGPP) to 2-methylisoborneol (2-MIB), which likely involves the intermediacy of 2-methyllinalyl diphosphate. This is 2-methylisoborneol synthase from Streptomyces ambofaciens (strain ATCC 23877 / 3486 / DSM 40053 / JCM 4204 / NBRC 12836 / NRRL B-2516).